Here is a 393-residue protein sequence, read N- to C-terminus: S-adenosylmethionine synthase (393 aa).

H17 provides a ligand contact to ATP. D19 is a Mg(2+) binding site. E45 contributes to the K(+) binding site. E58 and Q106 together coordinate L-methionine. The segment at 106 to 116 (QSAHIAQGVDA) is flexible loop. ATP contacts are provided by residues 171–173 (DAK), D246, 252–253 (RK), A269, and K273. L-methionine is bound at residue D246. Residue K277 coordinates L-methionine.

Belongs to the AdoMet synthase family. As to quaternary structure, homotetramer; dimer of dimers. Requires Mg(2+) as cofactor. K(+) is required as a cofactor.

It localises to the cytoplasm. The enzyme catalyses L-methionine + ATP + H2O = S-adenosyl-L-methionine + phosphate + diphosphate. The protein operates within amino-acid biosynthesis; S-adenosyl-L-methionine biosynthesis; S-adenosyl-L-methionine from L-methionine: step 1/1. Its function is as follows. Catalyzes the formation of S-adenosylmethionine (AdoMet) from methionine and ATP. The overall synthetic reaction is composed of two sequential steps, AdoMet formation and the subsequent tripolyphosphate hydrolysis which occurs prior to release of AdoMet from the enzyme. This is S-adenosylmethionine synthase from Roseobacter denitrificans (strain ATCC 33942 / OCh 114) (Erythrobacter sp. (strain OCh 114)).